A 392-amino-acid polypeptide reads, in one-letter code: Immunoglobulin-binding protein EibA (392 aa).

The N-terminal stretch at 1–27 (MSKKFTKAVLSAAMAGVLFGVSFDIMA) is a signal peptide. The interval 28–301 (AEQSYSALNA…IAANTRTLQQ (274 aa)) is surface exposed passenger domain. Topologically, residues 28–341 (AEQSYSALNA…GLFQPYSVGK (314 aa)) are extracellular. A coiled-coil region spans residues 174 to 215 (ESANSTIVANELEAQKGKLDAQKGELEAQKKNLGELTTRTDK). Residues 187 to 230 (AQKGKLDAQKGELEAQKKNLGELTTRTDKIDAAAAATAAKVESR) form a right-handed coiled-coil (RHcc) region. Positions 231-256 (TLVGVSSDGTLTRAEGAKNTISVNDG) are saddle domain. The tract at residues 257–322 (LVALSGRTDR…INENHKEMKR (66 aa)) is left-handed coiled-coil (LHcc). The segment at 299–341 (LQQHSARLDSQQRQINENHKEMKRAAAQSAALTGLFQPYSVGK) is outer membrane translocation of the passenger domain. The next 4 membrane-spanning stretches (beta stranded) occupy residues 342–352 (FNASAAVGGYS), 355–366 (QALAVGVGYRFN), 369–378 (TAAKAGVAFS), and 382–392 (ASWNVGVNFEF). The tract at residues 342 to 392 (FNASAAVGGYSDEQALAVGVGYRFNEQTAAKAGVAFSDGDASWNVGVNFEF) is translocator domain.

It belongs to the autotransporter-2 (AT-2) (TC 1.B.40) family. Eib subfamily. Homotrimer; can probably form mixed heterotrimers in vivo. Will form mixed heterotrimers with EibD; these are correctly located in the outer membrane and bind IgG Fc, although less well than homotrimers. Does not form trimers with distantly related YadA from Y.enterocolitica; coexpression was lethal and one of the genes is eliminated in vivo. If the full translocator domain (299-392) is exchanged with that of YadA ('368-455'), will form heterotrimers with YadA and vice-versa. In denaturing gels runs as 2 bands of about 121 and 131 kDa; extracting the sample with 88% phenol at 70 degrees Celsius reduces part of the signal to about 45 kDa. Binds the Fc portion of IgG; binds more than 1 Fc per subunit.

The protein resides in the cell surface. Its subcellular location is the cell outer membrane. Its function is as follows. Binds (in a non-immune fashion) to the Fc portion of human IgG but not IgA; binding occurs on the cell surface. Confers the ability to survive exposure to human serum exposure. Binds to the Fc portion of human IgG and to whole mouse antibodies also via Fc, binds more than 1 Fc or IgG. The sequence is that of Immunoglobulin-binding protein EibA from Escherichia coli.